Here is a 276-residue protein sequence, read N- to C-terminus: NADPH-dependent 7-cyano-7-deazaguanine reductase (276 aa).

Position 83 to 85 (83 to 85) interacts with substrate; it reads IES. 85 to 86 provides a ligand contact to NADPH; the sequence is SK. The active-site Thioimide intermediate is Cys-184. Asp-191 serves as the catalytic Proton donor. Substrate is bound at residue 223–224; sequence HE. Residue 252–253 participates in NADPH binding; the sequence is RG.

The protein belongs to the GTP cyclohydrolase I family. QueF type 2 subfamily. Homodimer.

The protein resides in the cytoplasm. The enzyme catalyses 7-aminomethyl-7-carbaguanine + 2 NADP(+) = 7-cyano-7-deazaguanine + 2 NADPH + 3 H(+). The protein operates within tRNA modification; tRNA-queuosine biosynthesis. Functionally, catalyzes the NADPH-dependent reduction of 7-cyano-7-deazaguanine (preQ0) to 7-aminomethyl-7-deazaguanine (preQ1). The chain is NADPH-dependent 7-cyano-7-deazaguanine reductase from Pseudomonas putida (strain ATCC 47054 / DSM 6125 / CFBP 8728 / NCIMB 11950 / KT2440).